The primary structure comprises 43 residues: uncharacterized protein (43 aa).

Composition is skewed to polar residues over residues 1-19 and 33-43; these read MSQK…SGAS and PENSISKTFSK. Residues 1 to 43 are disordered; that stretch reads MSQKLSFFQQNTRNGSGASRTLVIKPPTIQPKPENSISKTFSK.

This is an uncharacterized protein from Dictyostelium discoideum (Social amoeba).